Consider the following 201-residue polypeptide: MYB-like transcription factor EOBI (201 aa).

2 consecutive HTH myb-type domains span residues 10–62 (DVEV…LNYL) and 63–117 (RPDV…QKHI). DNA-binding regions (H-T-H motif) lie at residues 38-62 (WNSL…LNYL) and 90-113 (WSKI…RTRI). Positions 121 to 170 (DQNMKKPSKCEQNDQKAISTSQASTGPTDTIDSYSPSSYTENTNNNMENI) are disordered. The segment covering 135-159 (QKAISTSQASTGPTDTIDSYSPSSY) has biased composition (polar residues). Residues 160–169 (TENTNNNMEN) are compositionally biased toward low complexity.

As to expression, expressed exclusively in flower organs. Accumulates mostly in flower limbs, to a lower extent in pistils and flower tubes, and, at low levels, in stamens.

The protein resides in the nucleus. Functionally, MYB-type transcription factor controlling the production of volatile organic compounds (VOCs), including floral volatile benzenoids and phenylpropanoids (FVBP), in flowers of fragrant cultivars (e.g. cv. Mitchell and cv. V26) by regulating the expression of ODO1, a key regulator of the shikimate pathway, and of several biosynthetic floral scent-related genes (e.g. IGS, EGS, BSMT1, BSMT2, PAL1, PAL2, EPSPS, DAHPS, CS, CM1, ADT1 and PPA-AT). Binds to and activates the promoters of at least ODO1, IGS1 and PAL1. This Petunia hybrida (Petunia) protein is MYB-like transcription factor EOBI.